The primary structure comprises 154 residues: Myoglobin (154 aa).

One can recognise a Globin domain in the interval 2–148; it reads GLSDGEWQSV…FRNDIAAKYK (147 aa). Serine 4 is subject to Phosphoserine. Histidine 65 serves as a coordination point for nitrite. Position 65 (histidine 65) interacts with O2. Residue threonine 68 is modified to Phosphothreonine. Residue histidine 94 coordinates heme b.

It belongs to the globin family. As to quaternary structure, monomeric.

It is found in the cytoplasm. It localises to the sarcoplasm. The enzyme catalyses Fe(III)-heme b-[protein] + nitric oxide + H2O = Fe(II)-heme b-[protein] + nitrite + 2 H(+). It carries out the reaction H2O2 + AH2 = A + 2 H2O. In terms of biological role, monomeric heme protein which primary function is to store oxygen and facilitate its diffusion within muscle tissues. Reversibly binds oxygen through a pentacoordinated heme iron and enables its timely and efficient release as needed during periods of heightened demand. Depending on the oxidative conditions of tissues and cells, and in addition to its ability to bind oxygen, it also has a nitrite reductase activity whereby it regulates the production of bioactive nitric oxide. Under stress conditions, like hypoxia and anoxia, it also protects cells against reactive oxygen species thanks to its pseudoperoxidase activity. The protein is Myoglobin (MB) of Nycticebus coucang (Slow loris).